Reading from the N-terminus, the 60-residue chain is Mastoparan-A (60 aa).

An N-terminal signal peptide occupies residues 1 to 27 (MKNTILILFTAFIALLGFFGMSAEALA). AXPX repeat units follow at residues 27 to 30 (ADPI), 31 to 34 (ADPL), 35 to 38 (AGPN), and 41 to 43 (ADP). Positions 28–45 (DPIADPLAGPNAEADPEA) are excised as a propeptide. An Isoleucine amide modification is found at I59.

The protein belongs to the MCD family. Mastoparan subfamily. In terms of tissue distribution, expressed by the venom gland.

The protein localises to the secreted. It localises to the target cell membrane. Functionally, antimicrobial and mast cell degranulating peptide. Has broad spectrum antibacterial activity against both Gram-positive and Gram-negative bacteria (S.aureus MIC=32-64 ug/ml, S.xylosus MIC=2 ug/ml, S.alactolyticus MIC=12 ug/ml, C.koseri MIC=4 ug/ml, E.coli MIC=8 ug/ml, K.pneumoniae MIC=32 ug/ml, P.aerugiosa MIC=192 ug/ml, S.choleraesuis MIC=32 ug/ml, S.typhimurium MIC=32 ug/ml, V.parahamelytics MIC=16 ug/ml). Affects membrane permeability of E.coli. Shows hemolytic activities on sheep, chicken and human erythrocytes. Its mast cell degranulation activity may be related to the activation of G-protein coupled receptors in mast cells as well as interaction with other proteins located in cell endosomal membranes in the mast cells. This is Mastoparan-A from Vespa analis (Yellow-vented hornet).